Here is a 183-residue protein sequence, read N- to C-terminus: tRNA-splicing endonuclease (183 aa).

Residues Tyr-120, His-128, and Lys-159 contribute to the active site.

It belongs to the tRNA-intron endonuclease family. Archaeal short subfamily. Homotetramer; although the tetramer contains four active sites, only two participate in the cleavage. Therefore, it should be considered as a dimer of dimers.

The catalysed reaction is pretRNA = a 3'-half-tRNA molecule with a 5'-OH end + a 5'-half-tRNA molecule with a 2',3'-cyclic phosphate end + an intron with a 2',3'-cyclic phosphate and a 5'-hydroxyl terminus.. Its function is as follows. Endonuclease that removes tRNA introns. Cleaves pre-tRNA at the 5'- and 3'-splice sites to release the intron. The products are an intron and two tRNA half-molecules bearing 2',3' cyclic phosphate and 5'-OH termini. Recognizes a pseudosymmetric substrate in which 2 bulged loops of 3 bases are separated by a stem of 4 bp. This chain is tRNA-splicing endonuclease, found in Pyrobaculum aerophilum (strain ATCC 51768 / DSM 7523 / JCM 9630 / CIP 104966 / NBRC 100827 / IM2).